Here is a 589-residue protein sequence, read N- to C-terminus: MALAGGPDSFLHHPYYQDQVEQTSPHHPRDLAGPGFPAQPDRLAPHQEDDVDLEALVNDMDASLESLCSASETAPLLHNGQHARGPPPPGARPLRPQASPRHRVPRSQPLHILAARRLQEEDQQFRTSSLPAIPNPFPELCGPGSPPVLSPGSLPPGQAAAKQDVKVFSEDGTCKVVEILADMTARDLCQLLVYRSHCVDDNSWTLVEHHPHLGLERGLEDHERVTQVQHTLASESKFLFRKNYAKYEFFKNPTNFFPEQMVTWCQQSNGSQTQLLQNFLNSSSCPEIQGFLHVKELGRKSWKKLYVCLRRSGLYCSTKGASKEPRHLQLLADLEDSSIFSLIAGRKQYGAPTDYGFCIKPNRVRTEAKELRLLCAEDEQSRTCWMTAFRLLKYGMLLYQNYRVPQQRKAVLSPFSAPVRSVSENSLVAMDFSGQTGRVIENPAEAQSAALEEGHAWRKRSTRMNILGSQSPLHPSTLSTVIHRTQHWFHGRISREESHRIIKQQGLVDGLFLLRDSQSNPKAFVLTLCHHQKIKNFQILPCEDDGQTFFSLDDGNTKFSDLIQLVDFYQLNKGVLPCKLKHHCIRVAL.

2 disordered regions span residues 1-51 (MALA…EDDV) and 77-107 (LHNGQHARGPPPPGARPLRPQASPRHRVPRS). Residue S99 is modified to Phosphoserine. A Phosphoserine; by MTOR, MAPK1 and MAPK3 modification is found at S145. The Ras-associating domain maps to 161-245 (AKQDVKVFSE…SKFLFRKNYA (85 aa)). The PH domain occupies 285–394 (CPEIQGFLHV…WMTAFRLLKY (110 aa)). S413 bears the Phosphoserine; by MAPK1 and MAPK3; in vitro mark. At S423 the chain carries Phosphoserine; by MTOR and PKB/AKT1. S426 is subject to Phosphoserine. S471 is subject to Phosphoserine; by MTOR, MAPK1 and MAPK3. In terms of domain architecture, SH2 spans 488–584 (WFHGRISREE…VLPCKLKHHC (97 aa)).

This sequence belongs to the GRB7/10/14 family. Interacts with ligand-activated tyrosine kinase receptors, including FGFR1, INSR, IGF1R, MET and PDGFRB in a phosphotyrosine-dependent manner through the SH2 domain. Poorly binds to the EGFR. Directly interacts with MAP3K14/NIK and is recruited to the EGFR-ERBB2 complex. Interacts with GIGYF1/PERQ1 and GIGYF2/TNRC15. When unphosphorylated, interacts with AKT1 and when phosphorylated with YWHAE/14-3-3 epsilon. Interacts with NEDD4. Interacts with LRP6, thus interfering with the binding of AXIN1 to LRP6. Binds relatively non-specifically to several phosphoinositides, including PI(5)P, PI(4,5)P2, PI(3,4)P2 and PI(3,4,5)P3, with modest affinities through the PH domain. Binds to activated NRAS. Phosphorylated on serine residues upon EGF, FGF and PDGF stimulation.

It is found in the cytoplasm. Phosphorylation by mTORC1 stabilizes and activates GRB10 constituting a feedback pathway by which mTORC1 inhibits INSR-dependent signaling. Adapter protein which modulates coupling of a number of cell surface receptor kinases with specific signaling pathways. Binds to, and suppress signals from, activated receptors tyrosine kinases, including the insulin (INSR) and insulin-like growth factor (IGF1R) receptors. The inhibitory effect can be achieved by 2 mechanisms: interference with the signaling pathway and increased receptor degradation. Delays and reduces AKT1 phosphorylation in response to insulin stimulation. Blocks association between INSR and IRS1 and IRS2 and prevents insulin-stimulated IRS1 and IRS2 tyrosine phosphorylation. Recruits NEDD4 to IGF1R, leading to IGF1R ubiquitination, increased internalization and degradation by both the proteasomal and lysosomal pathways. A similar role in the mediation of ubiquitination also has been suggested with INSR. Negatively regulates Wnt signaling by interacting with LRP6 intracellular portion and interfering with the binding of AXIN1 to LRP6. Positive regulator of the KDR/VEGFR-2 signaling pathway. May inhibit NEDD4-mediated degradation of KDR/VEGFR-2. The chain is Growth factor receptor-bound protein 10 (Grb10) from Sus scrofa (Pig).